A 500-amino-acid polypeptide reads, in one-letter code: Cytochrome c-552 (500 aa).

The signal sequence occupies residues 1-24 (MKFLIKSLAVATISILGCLQTALA). Residues His102, Cys130, Cys133, Lys134, Cys168, Cys171, His172, Cys217, Cys220, and His221 each contribute to the heme c site. Ca(2+) contacts are provided by Glu223, Tyr224, Lys268, and Gln270. Tyr224 lines the substrate pocket. His271 is a substrate binding site. Positions 282, 289, 292, 293, 308, 321, 324, 325, and 400 each coordinate heme c. The tract at residues 477 to 500 (ARAKGLLPAEEADKPVAAPKAEAK) is disordered.

This sequence belongs to the cytochrome c-552 family. Ca(2+) serves as cofactor. It depends on heme c as a cofactor.

Its subcellular location is the periplasm. The catalysed reaction is 6 Fe(III)-[cytochrome c] + NH4(+) + 2 H2O = 6 Fe(II)-[cytochrome c] + nitrite + 8 H(+). It participates in nitrogen metabolism; nitrate reduction (assimilation). Its function is as follows. Catalyzes the reduction of nitrite to ammonia, consuming six electrons in the process. The protein is Cytochrome c-552 of Mannheimia haemolytica (Pasteurella haemolytica).